The chain runs to 704 residues: SH3KBP1-binding protein 1 (704 aa).

At Ala2 the chain carries N-acetylalanine. Residues 19 to 88 form the BTB domain; sequence EVIHLNVGGK…LRTKELDPRG (70 aa). The segment at 146–165 is disordered; it reads VGPQQIGGRPAPVRRSNTMP. The residue at position 163 (Thr163) is a Phosphothreonine. WD repeat units follow at residues 233-280, 283-322, 324-359, 428-466, and 548-586; these read RLDW…GGSE, VFHL…WQVQ, VQPI…LRMK, VHRS…GMIS, and LECE…DGLG. A disordered region spans residues 609 to 704; it reads PLTSSRASFP…PKNTLNETSF (96 aa). Over residues 611 to 631 the composition is skewed to low complexity; sequence TSSRASFPSPSPRTSLTSLHS. The short motif at 618–623 is the PXXXPR element; the sequence is PSPSPR. A phosphoserine mark is found at Ser644 and Ser646. The PXXXPR motif lies at 678–683; that stretch reads PTPAPR.

The protein belongs to the KCTD3 family. In terms of assembly, monomer. Interacts with CUL3; interaction is direct and forms a 5:5 heterodecamer. Interacts (via PXXXPR motifs) with SH3KBP1 (via SH3 domains). Directly interacts with cathepsin B/CTSB.

Its subcellular location is the lysosome. Its function is as follows. Inhibits CBL-SH3KBP1 complex mediated down-regulation of EGFR signaling by sequestration of SH3KBP1. Binds to SH3KBP1 and prevents its interaction with CBL and inhibits translocation of SH3KBP1 to EGFR containing vesicles upon EGF stimulation. In Rattus norvegicus (Rat), this protein is SH3KBP1-binding protein 1 (Shkbp1).